A 275-amino-acid chain; its full sequence is Tropinone reductase-like 2 (275 aa).

An NAD(+)-binding site is contributed by 17–41 (IITGGASGIGACTAELFHENGAKVV). Residue Ser150 coordinates substrate. Tyr163 functions as the Proton acceptor in the catalytic mechanism.

This sequence belongs to the short-chain dehydrogenases/reductases (SDR) family.

Its function is as follows. Has no tropinone reductase activity. The protein is Tropinone reductase-like 2 of Erythroxylum coca (Coca plant).